A 212-amino-acid polypeptide reads, in one-letter code: Ribosomal RNA small subunit methyltransferase G (212 aa).

Residues Gly72, Leu77, 123 to 124 (VE), and Arg138 each bind S-adenosyl-L-methionine.

The protein belongs to the methyltransferase superfamily. RNA methyltransferase RsmG family.

The protein resides in the cytoplasm. The catalysed reaction is guanosine(527) in 16S rRNA + S-adenosyl-L-methionine = N(7)-methylguanosine(527) in 16S rRNA + S-adenosyl-L-homocysteine. Specifically methylates the N7 position of guanine in position 527 of 16S rRNA. This is Ribosomal RNA small subunit methyltransferase G from Histophilus somni (strain 129Pt) (Haemophilus somnus).